Here is a 634-residue protein sequence, read N- to C-terminus: Serine/threonine kinase NLK (634 aa).

Positions S240–L531 constitute a Protein kinase domain. ATP is bound by residues I246 to V254 and K269. D366 serves as the catalytic Proton acceptor.

The protein belongs to the protein kinase superfamily. CMGC Ser/Thr protein kinase family. MAP kinase subfamily. As to quaternary structure, component of the beta-catenin-lit-1 complex (also called the lit-1/wrm-1 complex or the wrm-1/lit-1 kinase complex) at least composed of lit-1 and wrm-1. Interacts with wrm-1 (via N-terminus); the interaction is direct and activates lit-1 kinase activity which leads to the phosphorylation of pop-1. This promotes pop-1 interaction with par-5 and translocation of pop-1 from the nucleus to the cytoplasm. Interacts with pop-1 (when phosphorylated on 'Ser-118' and 'Ser-127'); the interaction is dependent on the beta-catenin-lit-1 complex. Mg(2+) is required as a cofactor. As to expression, expressed in the pharynx and seam and vulval cells.

Its subcellular location is the cytoplasm. The protein localises to the cell cortex. It localises to the nucleus. It catalyses the reaction L-seryl-[protein] + ATP = O-phospho-L-seryl-[protein] + ADP + H(+). The catalysed reaction is L-threonyl-[protein] + ATP = O-phospho-L-threonyl-[protein] + ADP + H(+). In terms of biological role, has a role in the Wnt signaling pathway controlling the asymmetry of cell divisions during embryogenesis. Operates in the AB and EMS cell lineages influencing cell specification. Required for body wall muscle development, endoderm development, pop-1 asymmetry and T-cell division asymmetry. Component of the beta-catenin-lit-1 complex which promotes the phosphorylation, down-regulation and subcellular relocation of pop-1. Regulates plp-1 nuclear localization in embryos. Plays a role in male tail tip morphogenesis. This chain is Serine/threonine kinase NLK, found in Caenorhabditis elegans.